A 1133-amino-acid chain; its full sequence is Exportin-4 (1133 aa).

Belongs to the exportin family. Interacts with Ran and cargo proteins in a GTP-dependent manner.

The protein resides in the cytoplasm. Its subcellular location is the nucleus. Mediates the nuclear export of proteins (cargos). In the nucleus binds cooperatively to its cargo and to the GTPase Ran in its active GTP-bound form. Docking of this trimeric complex to the nuclear pore complex (NPC) is mediated through binding to nucleoporins. Upon transit of a nuclear export complex into the cytoplasm, disassembling of the complex and hydrolysis of Ran-GTP to Ran-GDP cause release of the cargo from the export receptor. Xpo4 then return to the nuclear compartment and mediate another round of transport. The directionality of nuclear export is thought to be conferred by an asymmetric distribution of the GTP- and GDP-bound forms of Ran between the cytoplasm and nucleus. The protein is Exportin-4 (xpo4) of Dictyostelium discoideum (Social amoeba).